We begin with the raw amino-acid sequence, 68 residues long: Large ribosomal subunit protein uL30 (68 aa).

The protein belongs to the universal ribosomal protein uL30 family. Part of the 50S ribosomal subunit.

This chain is Large ribosomal subunit protein uL30, found in Agrobacterium fabrum (strain C58 / ATCC 33970) (Agrobacterium tumefaciens (strain C58)).